The sequence spans 235 residues: Uridylate kinase (235 aa).

10 to 13 is an ATP binding site; sequence KLSG. G52 is a UMP binding site. ATP is bound by residues G53 and R57. UMP is bound by residues D72 and 133–140; that span reads TSNPYFST. Residues T160, Y166, and D169 each contribute to the ATP site.

It belongs to the UMP kinase family. In terms of assembly, homohexamer.

The protein localises to the cytoplasm. It carries out the reaction UMP + ATP = UDP + ADP. It participates in pyrimidine metabolism; CTP biosynthesis via de novo pathway; UDP from UMP (UMPK route): step 1/1. With respect to regulation, inhibited by UTP. Functionally, catalyzes the reversible phosphorylation of UMP to UDP. This Solibacter usitatus (strain Ellin6076) protein is Uridylate kinase.